Reading from the N-terminus, the 748-residue chain is Subtilisin-like protease (748 aa).

The N-terminal stretch at 1–24 is a signal peptide; sequence MMKMELRLLVSLIFILCSISMLAA. Residues 37-115 enclose the Inhibitor I9 domain; the sequence is TYIVHVKKSE…ARPERTLELH (79 aa). The 479-residue stretch at 122–600 folds into the Peptidase S8 domain; sequence FLGLKQGQGL…AGHVNPVKAN (479 aa). Catalysis depends on charge relay system residues D147 and H206. Residues 365–454 enclose the PA domain; that stretch reads PLVYPGSFGY…VEVSYAAGLT (90 aa). Residues N376, N380, and N405 are each glycosylated (N-linked (GlcNAc...) asparagine). Catalysis depends on S533, which acts as the Charge relay system. N-linked (GlcNAc...) asparagine glycosylation is found at N675 and N722.

The protein belongs to the peptidase S8 family.

Its subcellular location is the secreted. The protein localises to the extracellular space. The protein resides in the apoplast. Its function is as follows. Required for arbuscular mycorrhiza (AM) development during AM symbiosis with AM fungi (e.g. Glomeromycota intraradices). The chain is Subtilisin-like protease from Medicago truncatula (Barrel medic).